Reading from the N-terminus, the 302-residue chain is Protoheme IX farnesyltransferase 2 (302 aa).

Helical transmembrane passes span 14–34 (IIFGNLISAAGGFLLAAQGSV), 36–56 (WWLLAATVVGLSLVVASGCAI), 85–105 (AALAHGVVLGLAGFALLWFCT), 108–128 (LATGCVLFGFVIYVGVYSLYM), 133–153 (VYGTLVGSLSGAVPPVAGYCA), 163–183 (AILLLMFSLWQMPHSYAIAIF), 209–229 (IVLYILAFAAATVMLVFGGYA), 230–250 (GYGYLAVAVATSLWWLKMALS), and 264–284 (QVFFFSIITITSLSVMMAVDG).

Belongs to the UbiA prenyltransferase family. Protoheme IX farnesyltransferase subfamily.

The protein resides in the cell inner membrane. It catalyses the reaction heme b + (2E,6E)-farnesyl diphosphate + H2O = Fe(II)-heme o + diphosphate. Its pathway is porphyrin-containing compound metabolism; heme O biosynthesis; heme O from protoheme: step 1/1. Functionally, converts heme B (protoheme IX) to heme O by substitution of the vinyl group on carbon 2 of heme B porphyrin ring with a hydroxyethyl farnesyl side group. This chain is Protoheme IX farnesyltransferase 2, found in Chromobacterium violaceum (strain ATCC 12472 / DSM 30191 / JCM 1249 / CCUG 213 / NBRC 12614 / NCIMB 9131 / NCTC 9757 / MK).